The primary structure comprises 87 residues: UPF0367 protein Syncc9902_0316 (87 aa).

It belongs to the UPF0367 family.

The protein is UPF0367 protein Syncc9902_0316 of Synechococcus sp. (strain CC9902).